The following is a 235-amino-acid chain: Probable carboxylesterase Os04g0669600 (235 aa).

Residues Ser-113, Asp-167, and His-199 each act as charge relay system in the active site.

It belongs to the AB hydrolase superfamily. AB hydrolase 2 family.

In terms of biological role, possesses carboxylesterase activity in vitro. In Oryza sativa subsp. japonica (Rice), this protein is Probable carboxylesterase Os04g0669600.